The chain runs to 535 residues: Methylmalonate-semialdehyde/malonate-semialdehyde dehydrogenase [acylating], mitochondrial (535 aa).

The transit peptide at 1–32 directs the protein to the mitochondrion; the sequence is MAAAVAAAAAVRSRILQVSSKVNSTWYPASSF. N6-acetyllysine; alternate is present on residues lysine 47, lysine 52, lysine 55, and lysine 76. Residues lysine 47, lysine 52, lysine 55, and lysine 76 each carry the N6-succinyllysine; alternate modification. Lysine 87 carries the N6-acetyllysine modification. Residues lysine 117 and lysine 129 each carry the N6-acetyllysine; alternate modification. Residues lysine 117 and lysine 129 each carry the N6-succinyllysine; alternate modification. NAD(+) is bound by residues alanine 183, phenylalanine 185, lysine 209, glutamate 212, arginine 213, and serine 262. Serine 262 is subject to Phosphoserine. An N6-acetyllysine modification is found at lysine 298. Catalysis depends on cysteine 317, which acts as the Nucleophile. N6-acetyllysine is present on residues lysine 330 and lysine 331. An N6-acetyllysine; alternate mark is found at lysine 364 and lysine 376. 2 positions are modified to N6-succinyllysine; alternate: lysine 364 and lysine 376. Serine 380 is modified (phosphoserine). Position 391 is an N6-succinyllysine (lysine 391). Residue glutamate 417 coordinates NAD(+). Lysine 500 is subject to N6-acetyllysine. Lysine 517 is modified (N6-succinyllysine).

It belongs to the aldehyde dehydrogenase family. In terms of assembly, homotetramer. In terms of tissue distribution, expressed in the head and flagellum of epididymal sperm but not in testicular sperm (at protein level). Kidney &gt; liver &gt; heart &gt; muscle &gt; brain.

The protein localises to the mitochondrion. It catalyses the reaction 3-oxopropanoate + NAD(+) + CoA + H2O = hydrogencarbonate + acetyl-CoA + NADH + H(+). The enzyme catalyses 2-methyl-3-oxopropanoate + NAD(+) + CoA + H2O = propanoyl-CoA + hydrogencarbonate + NADH + H(+). The catalysed reaction is (R)-2-methyl-3-oxopropanoate + NAD(+) + CoA + H2O = propanoyl-CoA + hydrogencarbonate + NADH + H(+). It carries out the reaction (S)-2-methyl-3-oxopropanoate + NAD(+) + CoA + H2O = propanoyl-CoA + hydrogencarbonate + NADH + H(+). Its function is as follows. Malonate and methylmalonate semialdehyde dehydrogenase involved in the catabolism of valine, thymine, and compounds catabolized by way of beta-alanine, including uracil and cytidine. The chain is Methylmalonate-semialdehyde/malonate-semialdehyde dehydrogenase [acylating], mitochondrial from Rattus norvegicus (Rat).